Consider the following 254-residue polypeptide: Small ribosomal subunit protein uS2 (254 aa).

This sequence belongs to the universal ribosomal protein uS2 family.

The sequence is that of Small ribosomal subunit protein uS2 from Brucella ovis (strain ATCC 25840 / 63/290 / NCTC 10512).